A 169-amino-acid polypeptide reads, in one-letter code: MILLGILASTTIIGLTSSAPLSSYERRDVSDNRPKIFLLMDERIPELENEILGNELGSDVTRTKRIGSLSIVNNLDVLRNRVMLELARRKQERDQRQIEENRRFLENIGKRSVPVSDAGKIVRSDKSRNDRNQPLQFNRIEWIEEEDPLFRGSQDDQMTRVQANELRLL.

An N-terminal signal peptide occupies residues 1 to 18 (MILLGILASTTIIGLTSS). Positions 19 to 96 (APLSSYERRD…ARRKQERDQR (78 aa)) are excised as a propeptide. Residues 83–108 (MLELARRKQERDQRQIEENRRFLENI) adopt a coiled-coil conformation. At Gln-97 the chain carries Pyrrolidone carboxylic acid. Ile-108 is modified (isoleucine amide). A propeptide spanning residues 109 to 169 (GKRSVPVSDA…RVQANELRLL (61 aa)) is cleaved from the precursor.

Post-translationally, residues Ile-66 to Gly-109 may constitute another form of the DH44 peptide, which has not been detected yet. In terms of tissue distribution, expressed in brain, ventral ganglia and the retrocerebral complex (at protein level).

It is found in the secreted. Regulation of fluid secretion. This chain is Diuretic hormone 44, found in Camponotus floridanus (Florida carpenter ant).